A 293-amino-acid chain; its full sequence is Elongation factor Ts (293 aa).

Residues T80–V83 form an involved in Mg(2+) ion dislocation from EF-Tu region.

Belongs to the EF-Ts family.

It localises to the cytoplasm. In terms of biological role, associates with the EF-Tu.GDP complex and induces the exchange of GDP to GTP. It remains bound to the aminoacyl-tRNA.EF-Tu.GTP complex up to the GTP hydrolysis stage on the ribosome. The chain is Elongation factor Ts from Aeromonas salmonicida (strain A449).